The following is a 422-amino-acid chain: Validoxylamine A glucosyltransferase (422 aa).

The protein belongs to the glycosyltransferase 2 family. Requires Mn(2+) as cofactor.

It catalyses the reaction validoxylamine A + UDP-alpha-D-glucose = validamycin A + UDP + H(+). In terms of biological role, involved in the biosynthesis of the antifungal agent validamycin A. Catalyzes the final attachment of glucose from UDP-alpha-D-glucose to validoxylamine A to yield validamycin A. UDP-glucose is the most efficient glycosyl donor, whereas GDP-glucose and ADP-glucose are much less efficient. ValG also utilizes UDP-galactose as substrate to produce the new validamycin analog, 4''-epi-validamycin A. This is Validoxylamine A glucosyltransferase from Streptomyces hygroscopicus subsp. jinggangensis (strain 5008).